The following is a 576-amino-acid chain: Proline--tRNA ligase (576 aa).

It belongs to the class-II aminoacyl-tRNA synthetase family. ProS type 1 subfamily. As to quaternary structure, homodimer.

The protein localises to the cytoplasm. It catalyses the reaction tRNA(Pro) + L-proline + ATP = L-prolyl-tRNA(Pro) + AMP + diphosphate. Its function is as follows. Catalyzes the attachment of proline to tRNA(Pro) in a two-step reaction: proline is first activated by ATP to form Pro-AMP and then transferred to the acceptor end of tRNA(Pro). As ProRS can inadvertently accommodate and process non-cognate amino acids such as alanine and cysteine, to avoid such errors it has two additional distinct editing activities against alanine. One activity is designated as 'pretransfer' editing and involves the tRNA(Pro)-independent hydrolysis of activated Ala-AMP. The other activity is designated 'posttransfer' editing and involves deacylation of mischarged Ala-tRNA(Pro). The misacylated Cys-tRNA(Pro) is not edited by ProRS. This chain is Proline--tRNA ligase, found in Psychrobacter sp. (strain PRwf-1).